Consider the following 370-residue polypeptide: Glutamate 5-kinase (370 aa).

ATP is bound at residue Lys-12. Substrate is bound by residues Ser-52, Asp-139, and Asn-151. ATP is bound by residues 171 to 172 (SD) and 213 to 219 (TGGMFTK). The PUA domain maps to 278-356 (QAHIAVDAGA…SDIESILGYS (79 aa)).

The protein belongs to the glutamate 5-kinase family.

It is found in the cytoplasm. It carries out the reaction L-glutamate + ATP = L-glutamyl 5-phosphate + ADP. Its pathway is amino-acid biosynthesis; L-proline biosynthesis; L-glutamate 5-semialdehyde from L-glutamate: step 1/2. Functionally, catalyzes the transfer of a phosphate group to glutamate to form L-glutamate 5-phosphate. This chain is Glutamate 5-kinase, found in Herpetosiphon aurantiacus (strain ATCC 23779 / DSM 785 / 114-95).